The following is a 384-amino-acid chain: GTPase Obg (384 aa).

One can recognise an Obg domain in the interval 1-159 (MKFIDEAKIE…RSLQLELKVL (159 aa)). The tract at residues 20–46 (ATSFRREKFVPRGGPDGGDGGKGGSVW) is disordered. Gly residues predominate over residues 33-43 (GPDGGDGGKGG). One can recognise an OBG-type G domain in the interval 160–348 (ADVGLLGMPN…LVHQINQYLI (189 aa)). GTP-binding positions include 166 to 173 (GMPNAGKS), 191 to 195 (FTTLH), 213 to 216 (DIPG), 284 to 287 (NKLD), and 329 to 331 (SAL). Residues Ser173 and Thr193 each coordinate Mg(2+). The tract at residues 364–384 (ATNVEIAEQQPKTDTGVFKPE) is disordered.

Belongs to the TRAFAC class OBG-HflX-like GTPase superfamily. OBG GTPase family. Monomer. The cofactor is Mg(2+).

It localises to the cytoplasm. Functionally, an essential GTPase which binds GTP, GDP and possibly (p)ppGpp with moderate affinity, with high nucleotide exchange rates and a fairly low GTP hydrolysis rate. Plays a role in control of the cell cycle, stress response, ribosome biogenesis and in those bacteria that undergo differentiation, in morphogenesis control. This chain is GTPase Obg, found in Neisseria meningitidis serogroup A / serotype 4A (strain DSM 15465 / Z2491).